The sequence spans 539 residues: Chaperonin GroEL (539 aa).

Residues 29-32, 86-90, Gly413, 477-479, and Asp493 contribute to the ATP site; these read TLGP, DGTTT, and NAA.

It belongs to the chaperonin (HSP60) family. As to quaternary structure, forms a cylinder of 14 subunits composed of two heptameric rings stacked back-to-back. Interacts with the co-chaperonin GroES.

The protein resides in the cytoplasm. The catalysed reaction is ATP + H2O + a folded polypeptide = ADP + phosphate + an unfolded polypeptide.. Functionally, together with its co-chaperonin GroES, plays an essential role in assisting protein folding. The GroEL-GroES system forms a nano-cage that allows encapsulation of the non-native substrate proteins and provides a physical environment optimized to promote and accelerate protein folding. The polypeptide is Chaperonin GroEL (Clavibacter michiganensis subsp. michiganensis (strain NCPPB 382)).